We begin with the raw amino-acid sequence, 104 residues long: MIPGEVFCAEGVIELNEGAPRTELDVVNTGDRPVQVGSHVHFPQANHALQFDRSAAHGLRLDIPAGTAVRFEPGIAQTVVLVPLRGTREVHGLSLTPPGKLDAS.

This sequence belongs to the urease beta subunit family. In terms of assembly, heterotrimer of UreA (gamma), UreB (beta) and UreC (alpha) subunits. Three heterotrimers associate to form the active enzyme.

Its subcellular location is the cytoplasm. The enzyme catalyses urea + 2 H2O + H(+) = hydrogencarbonate + 2 NH4(+). Its pathway is nitrogen metabolism; urea degradation; CO(2) and NH(3) from urea (urease route): step 1/1. This is Urease subunit beta from Rhodococcus opacus (strain B4).